We begin with the raw amino-acid sequence, 119 residues long: Defensin-like protein 260 (119 aa).

An N-terminal signal peptide occupies residues 1–24 (MKIASLKLLLLVSLLFAVTQNGIS). 4 cysteine pairs are disulfide-bonded: Cys44/Cys99, Cys63/Cys79, Cys69/Cys83, and Cys73/Cys85.

This sequence belongs to the DEFL family.

It is found in the secreted. The sequence is that of Defensin-like protein 260 from Arabidopsis thaliana (Mouse-ear cress).